Reading from the N-terminus, the 152-residue chain is UPF0179 protein Mlab_1307 (152 aa).

The protein belongs to the UPF0179 family.

The sequence is that of UPF0179 protein Mlab_1307 from Methanocorpusculum labreanum (strain ATCC 43576 / DSM 4855 / Z).